The primary structure comprises 184 residues: ATP-dependent protease subunit HslV (184 aa).

Thr12 is a catalytic residue. Na(+) is bound by residues Ala167, Cys170, and Thr173.

It belongs to the peptidase T1B family. HslV subfamily. As to quaternary structure, a double ring-shaped homohexamer of HslV is capped on each side by a ring-shaped HslU homohexamer. The assembly of the HslU/HslV complex is dependent on binding of ATP.

The protein localises to the cytoplasm. The catalysed reaction is ATP-dependent cleavage of peptide bonds with broad specificity.. With respect to regulation, allosterically activated by HslU binding. Functionally, protease subunit of a proteasome-like degradation complex believed to be a general protein degrading machinery. This Wolbachia pipientis subsp. Culex pipiens (strain wPip) protein is ATP-dependent protease subunit HslV.